The chain runs to 137 residues: Large ribosomal subunit protein eL28 (137 aa).

The residue at position 2 (serine 2) is an N-acetylserine. Glycyl lysine isopeptide (Lys-Gly) (interchain with G-Cter in SUMO2) cross-links involve residues lysine 58 and lysine 65. Serine 115 carries the phosphoserine modification.

The protein belongs to the eukaryotic ribosomal protein eL28 family. In terms of assembly, component of the large ribosomal subunit.

It is found in the cytoplasm. In terms of biological role, component of the large ribosomal subunit. The ribosome is a large ribonucleoprotein complex responsible for the synthesis of proteins in the cell. The polypeptide is Large ribosomal subunit protein eL28 (RPL28) (Oryctolagus cuniculus (Rabbit)).